The following is a 369-amino-acid chain: UDP-3-O-acylglucosamine N-acyltransferase (369 aa).

H263 functions as the Proton acceptor in the catalytic mechanism.

The protein belongs to the transferase hexapeptide repeat family. LpxD subfamily. As to quaternary structure, homotrimer.

The enzyme catalyses a UDP-3-O-[(3R)-3-hydroxyacyl]-alpha-D-glucosamine + a (3R)-hydroxyacyl-[ACP] = a UDP-2-N,3-O-bis[(3R)-3-hydroxyacyl]-alpha-D-glucosamine + holo-[ACP] + H(+). Its pathway is bacterial outer membrane biogenesis; LPS lipid A biosynthesis. In terms of biological role, catalyzes the N-acylation of UDP-3-O-acylglucosamine using 3-hydroxyacyl-ACP as the acyl donor. Is involved in the biosynthesis of lipid A, a phosphorylated glycolipid that anchors the lipopolysaccharide to the outer membrane of the cell. This Burkholderia ambifaria (strain MC40-6) protein is UDP-3-O-acylglucosamine N-acyltransferase.